Reading from the N-terminus, the 348-residue chain is NADH-quinone oxidoreductase subunit H (348 aa).

Helical transmembrane passes span 10-30 (LPLF…LVLI), 82-102 (GVFL…WAVV), 115-135 (VGLL…IMGG), 161-181 (IGFV…TTIV), 199-219 (LLDW…ISAL), 251-271 (LFFL…TILF), 287-307 (VPGV…FAMV), and 322-342 (LGWK…AAIL).

The protein belongs to the complex I subunit 1 family. As to quaternary structure, NDH-1 is composed of 14 different subunits. Subunits NuoA, H, J, K, L, M, N constitute the membrane sector of the complex.

Its subcellular location is the cell inner membrane. The enzyme catalyses a quinone + NADH + 5 H(+)(in) = a quinol + NAD(+) + 4 H(+)(out). NDH-1 shuttles electrons from NADH, via FMN and iron-sulfur (Fe-S) centers, to quinones in the respiratory chain. The immediate electron acceptor for the enzyme in this species is believed to be ubiquinone. Couples the redox reaction to proton translocation (for every two electrons transferred, four hydrogen ions are translocated across the cytoplasmic membrane), and thus conserves the redox energy in a proton gradient. This subunit may bind ubiquinone. The polypeptide is NADH-quinone oxidoreductase subunit H (Bartonella bacilliformis (strain ATCC 35685 / KC583 / Herrer 020/F12,63)).